Consider the following 148-residue polypeptide: Large ribosomal subunit protein bL9 (148 aa).

The protein belongs to the bacterial ribosomal protein bL9 family.

Its function is as follows. Binds to the 23S rRNA. The polypeptide is Large ribosomal subunit protein bL9 (Acinetobacter baumannii (strain AB307-0294)).